We begin with the raw amino-acid sequence, 188 residues long: Probable nicotinate-nucleotide adenylyltransferase (188 aa).

This sequence belongs to the NadD family.

It carries out the reaction nicotinate beta-D-ribonucleotide + ATP + H(+) = deamido-NAD(+) + diphosphate. Its pathway is cofactor biosynthesis; NAD(+) biosynthesis; deamido-NAD(+) from nicotinate D-ribonucleotide: step 1/1. Catalyzes the reversible adenylation of nicotinate mononucleotide (NaMN) to nicotinic acid adenine dinucleotide (NaAD). This chain is Probable nicotinate-nucleotide adenylyltransferase, found in Salinispora arenicola (strain CNS-205).